The sequence spans 228 residues: MALRTLVSRRTLATGLGFRQQLRGLQTFSLPDLPYNYGALEPAISGDIMQLHHQNHHQTYVTNYNKALEQLHDAISKGDAPTVAKLHSAIKFNGGGHINHSIFWKNLAPVREGGGEPPKGSLGWAIDTNFGSLEALVQKMNAEGAALQGSGWVWLALDKELKKLVVETTANQDPLVTKGPTLVPLLGIDVWEHAYYLQYKNVRPDYLKNIWKVINWKYASEVYEKESP.

The N-terminal 24 residues, 1-24 (MALRTLVSRRTLATGLGFRQQLRG), are a transit peptide targeting the mitochondrion. Residues His52, His100, Asp189, and His193 each contribute to the Mn(2+) site.

The protein belongs to the iron/manganese superoxide dismutase family. As to quaternary structure, homotetramer. It depends on Mn(2+) as a cofactor. Expressed most abundantly in parts of the plant which exhibit a high metabolic activity. Expressed in pre-shooting flower buds, vegetative buds, immature fruits and fully expanded leaves of basal shoots and seedlings.

It is found in the mitochondrion matrix. The catalysed reaction is 2 superoxide + 2 H(+) = H2O2 + O2. Destroys superoxide anion radicals which are normally produced within the cells and which are toxic to biological systems. This chain is Superoxide dismutase [Mn], mitochondrial (SOD), found in Prunus persica (Peach).